We begin with the raw amino-acid sequence, 97 residues long: Spermatogenesis-associated protein 45 (97 aa).

It belongs to the SPATA45 family.

This Mus musculus (Mouse) protein is Spermatogenesis-associated protein 45 (Spata45).